The following is a 129-amino-acid chain: UPF0102 protein Mrad2831_2938 (129 aa).

Belongs to the UPF0102 family.

This chain is UPF0102 protein Mrad2831_2938, found in Methylobacterium radiotolerans (strain ATCC 27329 / DSM 1819 / JCM 2831 / NBRC 15690 / NCIMB 10815 / 0-1).